The chain runs to 403 residues: PP2A regulatory subunit TAP46 (403 aa).

2 disordered regions span residues glutamate 158–aspartate 184 and alanine 351–glycine 403. Composition is skewed to acidic residues over residues glutamate 174 to aspartate 184 and glutamate 366 to alanine 375. Residues alanine 376–proline 391 show a composition bias toward basic and acidic residues.

The protein belongs to the IGBP1/TAP42 family. As to quaternary structure, interacts with NPP4 and NPP5, two catalytic subunits (subunit C) of PP2A.

It is found in the cytoplasm. It localises to the nucleus. Functionally, involved in the regulation of the TOR signaling pathway. Seems to act as a regulator of PP2A catalytic activity. This is PP2A regulatory subunit TAP46 from Nicotiana benthamiana.